The following is a 657-amino-acid chain: Glycogen debranching enzyme (657 aa).

Aspartate 336 (nucleophile) is an active-site residue. The Proton donor role is filled by glutamate 371. Residues 458–467 (NEANGEENRD) show a composition bias toward basic and acidic residues. A disordered region spans residues 458–479 (NEANGEENRDGTNNNYSNNHGK).

The protein belongs to the glycosyl hydrolase 13 family.

It carries out the reaction Hydrolysis of (1-&gt;6)-alpha-D-glucosidic linkages to branches with degrees of polymerization of three or four glucose residues in limit dextrin.. The protein operates within glycan degradation; glycogen degradation. In terms of biological role, removes maltotriose and maltotetraose chains that are attached by 1,6-alpha-linkage to the limit dextrin main chain, generating a debranched limit dextrin. This is Glycogen debranching enzyme from Escherichia coli O139:H28 (strain E24377A / ETEC).